We begin with the raw amino-acid sequence, 160 residues long: Protein-export protein SecB (160 aa).

This sequence belongs to the SecB family. As to quaternary structure, homotetramer, a dimer of dimers. One homotetramer interacts with 1 SecA dimer.

It is found in the cytoplasm. Functionally, one of the proteins required for the normal export of preproteins out of the cell cytoplasm. It is a molecular chaperone that binds to a subset of precursor proteins, maintaining them in a translocation-competent state. It also specifically binds to its receptor SecA. In Burkholderia multivorans (strain ATCC 17616 / 249), this protein is Protein-export protein SecB.